The chain runs to 179 residues: uncharacterized protein (179 aa).

A helical membrane pass occupies residues 5-25 (MLAGIGIGVAAALGVAAVASL).

This sequence to Rickettsia 17 kDa surface antigen.

It is found in the membrane. This is an uncharacterized protein from Escherichia coli O6:H1 (strain CFT073 / ATCC 700928 / UPEC).